The chain runs to 260 residues: MAFVPPQAGYDRAITVFSPDGRLFQVQYAREAVKRGATAVGVKCKDGVVLAVEKRVTSKLIEPESYEKIFQIDDHIAAASSGIIADARVLVDRARLEAQIYRLTYGEPVPLTVLVKKICDLKQMHTQYGGVRPFGAALLMAGVNEKPELFETDPSGAYFEWKAVAIGSGRNTAMAIFEEKYRDEMTLEEAIKLAVLALSKIMEEPSPESIEVAVISVKEKKFKKITPEEVAKCLEEALKEVEAEEVPEKEEDYSELDSNY.

The interval 241 to 260 (VEAEEVPEKEEDYSELDSNY) is disordered. Residues 242 to 260 (EAEEVPEKEEDYSELDSNY) are compositionally biased toward acidic residues.

The protein belongs to the peptidase T1A family. As to quaternary structure, the 20S proteasome core is composed of 14 alpha and 14 beta subunits that assemble into four stacked heptameric rings, resulting in a barrel-shaped structure. The two inner rings, each composed of seven catalytic beta subunits, are sandwiched by two outer rings, each composed of seven alpha subunits. The catalytic chamber with the active sites is on the inside of the barrel. Has a gated structure, the ends of the cylinder being occluded by the N-termini of the alpha-subunits. Is capped at one or both ends by the proteasome regulatory ATPase, PAN.

It is found in the cytoplasm. The formation of the proteasomal ATPase PAN-20S proteasome complex, via the docking of the C-termini of PAN into the intersubunit pockets in the alpha-rings, triggers opening of the gate for substrate entry. Interconversion between the open-gate and close-gate conformations leads to a dynamic regulation of the 20S proteasome proteolysis activity. In terms of biological role, component of the proteasome core, a large protease complex with broad specificity involved in protein degradation. The protein is Proteasome subunit alpha of Thermococcus sibiricus (strain DSM 12597 / MM 739).